The primary structure comprises 141 residues: uncharacterized protein (141 aa).

The Ferritin-like diiron domain maps to 13 to 141 (VTKGTELEKE…LKGILDRYFK (129 aa)). Residues Glu63, His66, Glu125, and His128 each coordinate Fe cation.

This is an uncharacterized protein from Methanocaldococcus jannaschii (strain ATCC 43067 / DSM 2661 / JAL-1 / JCM 10045 / NBRC 100440) (Methanococcus jannaschii).